Consider the following 380-residue polypeptide: Crotonobetainyl-CoA reductase (380 aa).

The protein belongs to the acyl-CoA dehydrogenase family. Homotetramer. FAD is required as a cofactor.

Its subcellular location is the cytoplasm. The enzyme catalyses 4-(trimethylamino)butanoyl-CoA + oxidized [electron-transfer flavoprotein] + H(+) = crotonobetainyl-CoA + reduced [electron-transfer flavoprotein]. It functions in the pathway amine and polyamine metabolism; carnitine metabolism. Its function is as follows. Catalyzes the reduction of crotonobetainyl-CoA to gamma-butyrobetainyl-CoA. In Salmonella arizonae (strain ATCC BAA-731 / CDC346-86 / RSK2980), this protein is Crotonobetainyl-CoA reductase.